The primary structure comprises 766 residues: 5-methyltetrahydropteroyltriglutamate--homocysteine methyltransferase (766 aa).

5-methyltetrahydropteroyltri-L-glutamate is bound by residues 16–19 (RELK) and lysine 122. L-homocysteine is bound by residues 443 to 445 (IGS) and glutamate 496. L-methionine is bound by residues 443 to 445 (IGS) and glutamate 496. Residues 527 to 528 (RC) and tryptophan 573 contribute to the 5-methyltetrahydropteroyltri-L-glutamate site. Aspartate 611 serves as a coordination point for L-homocysteine. Aspartate 611 is an L-methionine binding site. Position 617 (glutamate 617) interacts with 5-methyltetrahydropteroyltri-L-glutamate. Zn(2+) is bound by residues histidine 653, cysteine 655, and glutamate 677. Histidine 706 serves as the catalytic Proton donor. Cysteine 738 serves as a coordination point for Zn(2+).

It belongs to the vitamin-B12 independent methionine synthase family. Requires Zn(2+) as cofactor.

It carries out the reaction 5-methyltetrahydropteroyltri-L-glutamate + L-homocysteine = tetrahydropteroyltri-L-glutamate + L-methionine. It functions in the pathway amino-acid biosynthesis; L-methionine biosynthesis via de novo pathway; L-methionine from L-homocysteine (MetE route): step 1/1. Its function is as follows. Catalyzes the transfer of a methyl group from 5-methyltetrahydrofolate to homocysteine resulting in methionine formation. This Pseudomonas putida (strain W619) protein is 5-methyltetrahydropteroyltriglutamate--homocysteine methyltransferase.